A 403-amino-acid chain; its full sequence is S-adenosylmethionine synthase (403 aa).

His15 provides a ligand contact to ATP. Residue Asp17 coordinates Mg(2+). Glu43 is a K(+) binding site. Residues Glu56 and Gln99 each coordinate L-methionine. The segment at 99 to 109 (QSPHIAQGVDR) is flexible loop. ATP is bound by residues 166 to 168 (DAK), 232 to 233 (KF), Asp241, 247 to 248 (RK), Ala264, and Lys268. Asp241 contacts L-methionine. Lys272 contacts L-methionine.

This sequence belongs to the AdoMet synthase family. In terms of assembly, homotetramer; dimer of dimers. Requires Mg(2+) as cofactor. It depends on K(+) as a cofactor.

It localises to the cytoplasm. It carries out the reaction L-methionine + ATP + H2O = S-adenosyl-L-methionine + phosphate + diphosphate. It functions in the pathway amino-acid biosynthesis; S-adenosyl-L-methionine biosynthesis; S-adenosyl-L-methionine from L-methionine: step 1/1. Catalyzes the formation of S-adenosylmethionine (AdoMet) from methionine and ATP. The overall synthetic reaction is composed of two sequential steps, AdoMet formation and the subsequent tripolyphosphate hydrolysis which occurs prior to release of AdoMet from the enzyme. This Stenotrophomonas maltophilia (strain K279a) protein is S-adenosylmethionine synthase.